A 64-amino-acid chain; its full sequence is Weak toxin CM-9a (64 aa).

5 disulfide bridges follow: Cys-3–Cys-24, Cys-6–Cys-11, Cys-17–Cys-41, Cys-45–Cys-56, and Cys-57–Cys-62.

It belongs to the three-finger toxin family. Ancestral subfamily. Orphan group II sub-subfamily. As to expression, expressed by the venom gland.

It localises to the secreted. In terms of biological role, binds with low affinity to muscular (alpha-1-beta-1-delta-epsilon/CHRNA1-CHRNB1-CHRND-CHRNE) and very low affinity to neuronal (alpha-7/CHRNA7) nicotinic acetylcholine receptor (nAChR). The protein is Weak toxin CM-9a of Naja kaouthia (Monocled cobra).